We begin with the raw amino-acid sequence, 172 residues long: MNKLSSSAITTTWLAMIIIVLDQVTKYWANTSLTMGEPVAILPHLNLTLVYNYGAAFSFLSEVGGWQRWFFTALALVVGTALVIWLAKLPKRWTLEVVAINLVLSGAIGNVIDRILAGRVTDFVDFYIGSWHYATFNVADMGISIGAVLLIISEFWLKPRHEKKAHSTEESV.

4 helical membrane-spanning segments follow: residues 4–24 (LSSS…LDQV), 39–59 (VAIL…AFSF), 69–89 (WFFT…LAKL), and 93–113 (WTLE…NVID). Active-site residues include Asp122 and Asp140. Residues 136 to 156 (FNVADMGISIGAVLLIISEFW) traverse the membrane as a helical segment.

The protein belongs to the peptidase A8 family.

The protein localises to the cell inner membrane. It catalyses the reaction Release of signal peptides from bacterial membrane prolipoproteins. Hydrolyzes -Xaa-Yaa-Zaa-|-(S,diacylglyceryl)Cys-, in which Xaa is hydrophobic (preferably Leu), and Yaa (Ala or Ser) and Zaa (Gly or Ala) have small, neutral side chains.. Its pathway is protein modification; lipoprotein biosynthesis (signal peptide cleavage). Functionally, this protein specifically catalyzes the removal of signal peptides from prolipoproteins. This chain is Lipoprotein signal peptidase, found in Hydrogenovibrio crunogenus (strain DSM 25203 / XCL-2) (Thiomicrospira crunogena).